Reading from the N-terminus, the 131-residue chain is D-ribose pyranase (131 aa).

His-20 (proton donor) is an active-site residue. Substrate is bound by residues Asp-28, His-98, and 120 to 122; that span reads YAN.

It belongs to the RbsD / FucU family. RbsD subfamily. Homodecamer.

The protein resides in the cytoplasm. The enzyme catalyses beta-D-ribopyranose = beta-D-ribofuranose. It functions in the pathway carbohydrate metabolism; D-ribose degradation; D-ribose 5-phosphate from beta-D-ribopyranose: step 1/2. In terms of biological role, catalyzes the interconversion of beta-pyran and beta-furan forms of D-ribose. This is D-ribose pyranase from Bacillus cereus (strain B4264).